A 126-amino-acid polypeptide reads, in one-letter code: Fluoride-specific ion channel FluC (126 aa).

The next 4 membrane-spanning stretches (helical) occupy residues 4–24 (PLLS…LLGL), 33–53 (IPLG…FAMA), 67–87 (FVIT…IEIV), and 97–117 (MAML…CLGL). Residues Gly74 and Thr77 each coordinate Na(+).

It belongs to the fluoride channel Fluc/FEX (TC 1.A.43) family.

Its subcellular location is the cell inner membrane. It catalyses the reaction fluoride(in) = fluoride(out). With respect to regulation, na(+) is not transported, but it plays an essential structural role and its presence is essential for fluoride channel function. In terms of biological role, fluoride-specific ion channel. Important for reducing fluoride concentration in the cell, thus reducing its toxicity. This chain is Fluoride-specific ion channel FluC, found in Acinetobacter baumannii (strain ACICU).